The primary structure comprises 190 residues: Probable nicotinate-nucleotide adenylyltransferase (190 aa).

This sequence belongs to the NadD family.

It catalyses the reaction nicotinate beta-D-ribonucleotide + ATP + H(+) = deamido-NAD(+) + diphosphate. Its pathway is cofactor biosynthesis; NAD(+) biosynthesis; deamido-NAD(+) from nicotinate D-ribonucleotide: step 1/1. Functionally, catalyzes the reversible adenylation of nicotinate mononucleotide (NaMN) to nicotinic acid adenine dinucleotide (NaAD). The polypeptide is Probable nicotinate-nucleotide adenylyltransferase (Myxococcus xanthus (strain DK1622)).